Consider the following 623-residue polypeptide: Glutathione import ATP-binding protein GsiA (623 aa).

2 consecutive ABC transporter domains span residues V15–L269 and L314–L564. Residues G49–S56 and G357–S364 contribute to the ATP site.

It belongs to the ABC transporter superfamily. Glutathione importer (TC 3.A.1.5.11) family. As to quaternary structure, the complex is composed of two ATP-binding proteins (GsiA), two transmembrane proteins (GsiC and GsiD) and a solute-binding protein (GsiB).

The protein localises to the cell inner membrane. It catalyses the reaction glutathione(out) + ATP + H2O = glutathione(in) + ADP + phosphate + H(+). Part of the ABC transporter complex GsiABCD involved in glutathione import. Responsible for energy coupling to the transport system. This chain is Glutathione import ATP-binding protein GsiA, found in Shigella dysenteriae serotype 1 (strain Sd197).